Reading from the N-terminus, the 157-residue chain is 6,7-dimethyl-8-ribityllumazine synthase (157 aa).

5-amino-6-(D-ribitylamino)uracil is bound by residues Phe-22, Ala-56 to Glu-58, and Val-81 to Ile-83. Glu-86–Thr-87 is a binding site for (2S)-2-hydroxy-3-oxobutyl phosphate. The Proton donor role is filled by His-89. A 5-amino-6-(D-ribitylamino)uracil-binding site is contributed by Phe-114. Arg-128 is a binding site for (2S)-2-hydroxy-3-oxobutyl phosphate.

It belongs to the DMRL synthase family.

It catalyses the reaction (2S)-2-hydroxy-3-oxobutyl phosphate + 5-amino-6-(D-ribitylamino)uracil = 6,7-dimethyl-8-(1-D-ribityl)lumazine + phosphate + 2 H2O + H(+). The protein operates within cofactor biosynthesis; riboflavin biosynthesis; riboflavin from 2-hydroxy-3-oxobutyl phosphate and 5-amino-6-(D-ribitylamino)uracil: step 1/2. Functionally, catalyzes the formation of 6,7-dimethyl-8-ribityllumazine by condensation of 5-amino-6-(D-ribitylamino)uracil with 3,4-dihydroxy-2-butanone 4-phosphate. This is the penultimate step in the biosynthesis of riboflavin. The polypeptide is 6,7-dimethyl-8-ribityllumazine synthase (Chlamydia muridarum (strain MoPn / Nigg)).